A 1267-amino-acid chain; its full sequence is Ankyrin repeat and ELMO domain-containing protein D (1267 aa).

Residues 307–466 (SHQRLLETLW…FVSGLASEVL (160 aa)) form the ELMO domain. Positions 486 to 496 (KKKEKKSEKRG) are enriched in basic and acidic residues. Residues 486–598 (KKKEKKSEKR…NNHILNNNHL (113 aa)) are disordered. The span at 507-598 (GSNGNINSTT…NNHILNNNHL (92 aa)) shows a compositional bias: low complexity. ANK repeat units follow at residues 655-685 (DGNS…FLNT), 689-718 (QGLT…DPFI), 767-796 (TLET…NINN), and 801-830 (SGQN…DPSI). Disordered stretches follow at residues 854-908 (NPTK…NSTS), 924-1040 (TSIN…SPIF), 1057-1082 (SPTQ…NGAE), and 1103-1215 (ENLT…PPKD). Low complexity-rich tracts occupy residues 859 to 870 (SRSTSSTSSSTS), 895 to 908 (ITNN…NSTS), and 924 to 1033 (TSIN…STSP). Residues 1057–1080 (SPTQESPQVISTPTSPPYLSNNNG) show a composition bias toward polar residues. Composition is skewed to low complexity over residues 1108–1176 (NSGN…IGSH) and 1184–1213 (HNGP…VTPP).

The sequence is that of Ankyrin repeat and ELMO domain-containing protein D (elmoD) from Dictyostelium discoideum (Social amoeba).